We begin with the raw amino-acid sequence, 671 residues long: Preterminal protein (671 aa).

A Nuclear localization signal motif is present at residues 380–389 (RLPVRRRRRR). The disordered stretch occupies residues 386-411 (RRRRVPPPPPPPEEEEGEALMEEEIE). Over residues 397 to 411 (PEEEEGEALMEEEIE) the composition is skewed to acidic residues. Residue S580 is modified to O-(5'-phospho-DNA)-serine. The interval 645–671 (GADVPLPPLPAGPEPPLPPGARPRHRF) is disordered. A compositionally biased stretch (pro residues) spans 649–665 (PLPPLPAGPEPPLPPGA).

The protein belongs to the adenoviridae terminal protein family. Heterodimer with the polymerase; this heterodimer binds to bp 9 to 18 of the genome. Interacts with host POU2F1; POU2F1 binds to the auxiliary sequences in the inverted terminal repeats and tethers the pTP-POL heterodimer to the origin DNA thereby participating in the assembly of the pre-initiation complex (POL-TP-DBP-NFIA-POU2F1). Post-translationally, preterminal protein is used to replicate viral genome, upon genomic encapsidation it is processed first into iTP and finally into TP by adenovirus protease.

Its subcellular location is the host nucleus matrix. Its function is as follows. Protein covalently bound to the viral DNA that acts as a primer for viral genomic replication by DNA strand displacement. Assembles on the viral origin of replication in an initiation complex with viral polymerase, DBP, host NFIA and host POU2F1/OCT1. During initiation, the polymerase covalently couples the first dCTP with Ser-580 of pTP. The terminal protein stimulates the template activity over 20 fold compared to protein-free templates. Neo-synthesized viral genomes are linked to two preterminal proteins, one for each 5' end. These new genomes are encapsidated in the nucleus, and during capsid maturation by viral protease, preterminal protein is first cleaved into intermediary (iTP), then into mature TP. May play a role in host nuclear matrix localization of genomic DNA. The polypeptide is Preterminal protein (Human adenovirus C serotype 5 (HAdV-5)).